A 387-amino-acid polypeptide reads, in one-letter code: Phosphoglycerate kinase (387 aa).

Substrate-binding positions include 21–23, Arg36, 60–63, Arg114, and Arg147; these read DLN and HLGR. ATP-binding positions include Lys198, Glu313, and 339–342; that span reads GGDT.

It belongs to the phosphoglycerate kinase family. Monomer.

The protein localises to the cytoplasm. The enzyme catalyses (2R)-3-phosphoglycerate + ATP = (2R)-3-phospho-glyceroyl phosphate + ADP. It functions in the pathway carbohydrate degradation; glycolysis; pyruvate from D-glyceraldehyde 3-phosphate: step 2/5. This chain is Phosphoglycerate kinase, found in Baumannia cicadellinicola subsp. Homalodisca coagulata.